We begin with the raw amino-acid sequence, 668 residues long: DNA ligase (668 aa).

NAD(+)-binding positions include Asp-35 to Asp-39, Ser-84 to Leu-85, and Glu-115. Lys-117 (N6-AMP-lysine intermediate) is an active-site residue. Residues Arg-138, Glu-172, Lys-288, and Lys-312 each contribute to the NAD(+) site. Residues Cys-406, Cys-409, Cys-425, and Cys-430 each contribute to the Zn(2+) site. Residues Lys-589–Ser-668 enclose the BRCT domain.

This sequence belongs to the NAD-dependent DNA ligase family. LigA subfamily. Mg(2+) serves as cofactor. Mn(2+) is required as a cofactor.

The enzyme catalyses NAD(+) + (deoxyribonucleotide)n-3'-hydroxyl + 5'-phospho-(deoxyribonucleotide)m = (deoxyribonucleotide)n+m + AMP + beta-nicotinamide D-nucleotide.. Its function is as follows. DNA ligase that catalyzes the formation of phosphodiester linkages between 5'-phosphoryl and 3'-hydroxyl groups in double-stranded DNA using NAD as a coenzyme and as the energy source for the reaction. It is essential for DNA replication and repair of damaged DNA. The chain is DNA ligase from Petrotoga mobilis (strain DSM 10674 / SJ95).